Reading from the N-terminus, the 134-residue chain is Protein PsiB (134 aa).

In terms of biological role, could be involved directly or indirectly in exopolysaccharide synthesis. The chain is Protein PsiB (psiB) from Rhizobium leguminosarum bv. phaseoli.